A 582-amino-acid polypeptide reads, in one-letter code: Potassium-transporting ATPase potassium-binding subunit (582 aa).

11 consecutive transmembrane segments (helical) span residues 6–26 (LVQLLFFLSVLLVLSWPLGLY), 65–85 (IYALVMLGLNAFGMVFVYVLE), 87–107 (LQGGLPLNPLHLPGVDPFVAV), 136–156 (GLAVQNFLSAATGMAVAVALI), 178–198 (VLYILLPLSFVLALLLVWQGV), 277–297 (LEMLAILLIPAALCHTFGVMI), 304–324 (LAILAAMTILFAGFAALTLAA), 402–422 (GLYGMLVFAVVTVFVAGLMVG), 441–461 (ALVILIPPFLCLAGTALAAVI), 505–525 (IAGAVAMFVSRYWLIVPVLAL), and 546–566 (GGIFVALLIIVVLVVGALTFV).

The protein belongs to the KdpA family. In terms of assembly, the system is composed of three essential subunits: KdpA, KdpB and KdpC.

Its subcellular location is the cell inner membrane. Functionally, part of the high-affinity ATP-driven potassium transport (or Kdp) system, which catalyzes the hydrolysis of ATP coupled with the electrogenic transport of potassium into the cytoplasm. This subunit binds the periplasmic potassium ions and delivers the ions to the membrane domain of KdpB through an intramembrane tunnel. The polypeptide is Potassium-transporting ATPase potassium-binding subunit (Solidesulfovibrio magneticus (strain ATCC 700980 / DSM 13731 / RS-1) (Desulfovibrio magneticus)).